The chain runs to 405 residues: Teichoic acid D-alanyltransferase (405 aa).

The Extracellular portion of the chain corresponds to 1–9; that stretch reads MLNLQPYEN. Residues 10-29 traverse the membrane as a helical segment; the sequence is PQYFVYLIIALLPVIIGMFK. Residues 30-33 lie on the Cytoplasmic side of the membrane; sequence GFRM. Residues 34–49 form a helical membrane-spanning segment; it reads HWYESIFSLVFLVLIF. Topologically, residues 50–53 are extracellular; the sequence is DADK. The chain crosses the membrane as a helical span at residues 54–80; that stretch reads WPQGKALLGYVVFNLLLVYAYFKYRTR. Over 81-86 the chain is Cytoplasmic; sequence EGSKNS. Residues 87 to 111 traverse the membrane as a helical segment; sequence TAVFYLSVALGIAHVAVVKFTPLFQ. At 112–121 the chain is on the extracellular side; sequence HHGSILGFLG. The helical transmembrane segment at 122–138 threads the bilayer; sequence ISYLTFRVVGTIMEIRD. The Cytoplasmic segment spans residues 139 to 145; it reads GSIKDLN. Residues 146 to 175 lie within the membrane without spanning it; sequence MWKFIQFLLFFPTISSGPIDRYRRFVKDYD. At 176-179 the chain is on the cytoplasmic side; the sequence is RVPD. The chain crosses the membrane as a helical span at residues 180-223; that stretch reads PEHYAQLVTKAIHYLMLGFLYKFILGYIFGTLWLPSVEHMAMAS. Residues 224–232 are Extracellular-facing; that stretch reads RGGAFLGLS. A helical membrane pass occupies residues 233 to 264; the sequence is WPVVGVMYAYSGYLFFDFAGYSLFAVAISYLM. Over 265-274 the chain is Cytoplasmic; that stretch reads GIETPMNFNK. An intramembrane segment occupies 275–310; sequence PWSHITSRLLNRWQLSLSFWFRDYIYMRFVFFMMKH. Topologically, residues 311–315 are cytoplasmic; the sequence is KWIKS. A helical transmembrane segment spans residues 316–335; that stretch reads RVWTAFVGYLVLFLIMGIWH. Histidine 335 is an active-site residue. At 336–338 the chain is on the extracellular side; the sequence is GET. The helical transmembrane segment at 339–372 threads the bilayer; it reads WYYIVYGLFHAMLINLTDAWLRFKKKHKDFFPHN. Topologically, residues 373–378 are cytoplasmic; that stretch reads RATHYP. A helical transmembrane segment spans residues 379–399; the sequence is SPFSMTANAVCFSFLIFSGFL. Over 400 to 405 the chain is Extracellular; it reads DKLWFH.

Belongs to the membrane-bound acyltransferase family.

The protein resides in the cell membrane. Its pathway is cell wall biogenesis; lipoteichoic acid biosynthesis. Functionally, O-acyltransferase that catalyzes D-alanylation of both teichoic acid and lipoteichoic acid (LTA). D-alanylation of LTA plays an important role in modulating the properties of the cell wall in Gram-positive bacteria, influencing the net charge of the cell wall. Catalyzes D-alanylation from DltC carrier protein. This is Teichoic acid D-alanyltransferase from Lacticaseibacillus rhamnosus (Lactobacillus rhamnosus).